Consider the following 185-residue polypeptide: Ribosome-recycling factor (185 aa).

This sequence belongs to the RRF family.

It is found in the cytoplasm. Its function is as follows. Responsible for the release of ribosomes from messenger RNA at the termination of protein biosynthesis. May increase the efficiency of translation by recycling ribosomes from one round of translation to another. This Klebsiella pneumoniae (strain 342) protein is Ribosome-recycling factor.